Consider the following 332-residue polypeptide: L-lactate dehydrogenase A chain (332 aa).

NAD(+) contacts are provided by residues 29–57 and arginine 99; that span reads GMVG…MEDK. Substrate contacts are provided by arginine 106, asparagine 138, and arginine 169. Asparagine 138 lines the NAD(+) pocket. The Proton acceptor role is filled by histidine 193. Threonine 248 lines the substrate pocket.

This sequence belongs to the LDH/MDH superfamily. LDH family. As to quaternary structure, homotetramer.

It localises to the cytoplasm. The catalysed reaction is (S)-lactate + NAD(+) = pyruvate + NADH + H(+). It participates in fermentation; pyruvate fermentation to lactate; (S)-lactate from pyruvate: step 1/1. Functionally, interconverts simultaneously and stereospecifically pyruvate and lactate with concomitant interconversion of NADH and NAD(+). The protein is L-lactate dehydrogenase A chain (ldha) of Eleginops maclovinus (Patagonian blennie).